The following is a 559-amino-acid chain: Large neutral amino acids transporter small subunit 3 (559 aa).

The helical transmembrane segment at 20–40 threads the bilayer; that stretch reads VLENLFFSAVLLGWGSLLIIL. Asparagine 57 is a glycosylation site (N-linked (GlcNAc...) asparagine). The next 5 membrane-spanning stretches (helical) occupy residues 78–98, 105–124, 131–151, 168–188, and 191–211; these read LGFTIGSFVLSATTLPLGILM, PVRLVGSACFTASCTLMALA, LSPLIFLALSLNGFGGICLTF, MALMIGSYASSAITFPGIKLI, and AGVAFVVIMFTWSGLACLIFL. N-linked (GlcNAc...) asparagine glycosylation is found at asparagine 212 and asparagine 229. Residues serine 237, serine 262, and serine 267 each carry the phosphoserine modification. 6 helical membrane-spanning segments follow: residues 304–324, 357–377, 419–439, 446–466, 485–505, and 510–530; these read FLWSLLTMGMTQLRIIFYMAA, SVFGAMQLLCLLTCPLIGYIM, AISAFTLTNLLLVGFGITCLI, FVTFVLHTIVRGFFHSACGSL, LISAVFALLQQPLFMAMVGPL, and FWVNLGLLLFSLLGFLLPSYL.

The protein belongs to the SLC43A transporter (TC 2.A.1.44) family. As to expression, ubiquitously expressed in fetus and adult. Highest expression in adult pancreas, liver, skeletal muscle. In fetus, highest expression in liver and lower levels in kidney, and lung. Exclusively expressed in the glomeruli along the glomerular capillary walls.

It is found in the cell membrane. Its subcellular location is the apical cell membrane. The protein localises to the endoplasmic reticulum membrane. It catalyses the reaction D-leucine(in) = D-leucine(out). The catalysed reaction is L-leucine(in) = L-leucine(out). It carries out the reaction L-isoleucine(in) = L-isoleucine(out). The enzyme catalyses L-methionine(in) = L-methionine(out). It catalyses the reaction L-phenylalanine(in) = L-phenylalanine(out). The catalysed reaction is L-valine(in) = L-valine(out). Its function is as follows. Uniport that mediates the transport of neutral amino acids such as L-leucine, L-isoleucine, L-valine, and L-phenylalanine. The transport activity is sodium ions-independent, electroneutral and mediated by a facilitated diffusion. This is Large neutral amino acids transporter small subunit 3 from Homo sapiens (Human).